Reading from the N-terminus, the 122-residue chain is Small ribosomal subunit protein uS13 (122 aa).

The segment covering 95–116 (GLPCRGQKTKTNARTRKGKKKT) has biased composition (basic residues). Residues 95 to 122 (GLPCRGQKTKTNARTRKGKKKTVGAATK) are disordered.

It belongs to the universal ribosomal protein uS13 family. Part of the 30S ribosomal subunit. Forms a loose heterodimer with protein S19. Forms two bridges to the 50S subunit in the 70S ribosome.

In terms of biological role, located at the top of the head of the 30S subunit, it contacts several helices of the 16S rRNA. In the 70S ribosome it contacts the 23S rRNA (bridge B1a) and protein L5 of the 50S subunit (bridge B1b), connecting the 2 subunits; these bridges are implicated in subunit movement. Contacts the tRNAs in the A and P-sites. The sequence is that of Small ribosomal subunit protein uS13 from Aliarcobacter butzleri (strain RM4018) (Arcobacter butzleri).